The primary structure comprises 347 residues: Transcription factor EC (347 aa).

Residues 1–119 (MTLDHQIINP…GLTSASCPSS (119 aa)) are necessary for transcriptional transactivation. A bHLH domain is found at 139-192 (QKKDNHNLIERRRRYNINYRIKELGTLIPKSNDPDMRWNKGTILKASVEYIKWL). The tract at residues 271–347 (PSPELCDQAI…SFSSDDGDEL (77 aa)) is necessary for transcriptional transactivation. Residues 319–347 (DPLLSATSPAVSKESSRRSSFSSDDGDEL) form a disordered region. Residues 326-341 (SPAVSKESSRRSSFSS) show a composition bias toward low complexity.

The protein belongs to the MiT/TFE family. As to quaternary structure, homodimer. Forms heterodimers with TFE3. Forms heterodimers with MITF. Interacts with MITF. In terms of tissue distribution, expressed moderately in spleen, kidney, bone marrow, small intestine and leukocytes. Expressed weakly in testis, trachea and colon.

It is found in the nucleus. Its function is as follows. Transcriptional regulator that acts as a repressor or an activator. Acts as a transcriptional repressor on minimal promoter containing element F (that includes an E-box sequence). Binds to element F in an E-box sequence-specific manner. Acts as a transcriptional transactivator on the proximal promoter region of the tartrate-resistant acid phosphatase (TRAP) E-box containing promoter. Collaborates with MITF in target gene activation. Acts as a transcriptional repressor on minimal promoter containing mu E3 enhancer sequence. Binds to mu E3 DNA sequence of the immunoglobulin heavy-chain gene enhancer. Binds DNA in a homo- or heterodimeric form. This Homo sapiens (Human) protein is Transcription factor EC (TFEC).